The following is a 236-amino-acid chain: 2,3,4,5-tetrahydropyridine-2,6-dicarboxylate N-acetyltransferase (236 aa).

This sequence belongs to the transferase hexapeptide repeat family. DapH subfamily.

It catalyses the reaction (S)-2,3,4,5-tetrahydrodipicolinate + acetyl-CoA + H2O = L-2-acetamido-6-oxoheptanedioate + CoA. The protein operates within amino-acid biosynthesis; L-lysine biosynthesis via DAP pathway; LL-2,6-diaminopimelate from (S)-tetrahydrodipicolinate (acetylase route): step 1/3. Functionally, catalyzes the transfer of an acetyl group from acetyl-CoA to tetrahydrodipicolinate. In Clostridium botulinum (strain Loch Maree / Type A3), this protein is 2,3,4,5-tetrahydropyridine-2,6-dicarboxylate N-acetyltransferase.